Consider the following 547-residue polypeptide: Chaperonin GroEL 1 (547 aa).

ATP-binding positions include 30-33 (TLGP), K51, 87-91 (DGTTT), G415, 479-481 (NAA), and D495. A disordered region spans residues 525–547 (PKKKGAPAGGGMGGMGGMDEMDY). Residues 531 to 541 (PAGGGMGGMGG) show a composition bias toward gly residues.

This sequence belongs to the chaperonin (HSP60) family. In terms of assembly, forms a cylinder of 14 subunits composed of two heptameric rings stacked back-to-back. Interacts with the co-chaperonin GroES.

The protein localises to the cytoplasm. It carries out the reaction ATP + H2O + a folded polypeptide = ADP + phosphate + an unfolded polypeptide.. Its function is as follows. Together with its co-chaperonin GroES, plays an essential role in assisting protein folding. The GroEL-GroES system forms a nano-cage that allows encapsulation of the non-native substrate proteins and provides a physical environment optimized to promote and accelerate protein folding. In Anaeromyxobacter sp. (strain Fw109-5), this protein is Chaperonin GroEL 1.